The chain runs to 428 residues: Maltoporin (428 aa).

Residues 1 to 24 (MTTLRKLPIALAVAAGVLSTQAMA) form the signal peptide.

The protein belongs to the porin LamB (TC 1.B.3) family. Homotrimer formed of three 18-stranded antiparallel beta-barrels, containing three independent channels.

The protein resides in the cell outer membrane. It catalyses the reaction beta-maltose(in) = beta-maltose(out). Its function is as follows. Involved in the transport of maltose and maltodextrins. This chain is Maltoporin, found in Yersinia enterocolitica serotype O:8 / biotype 1B (strain NCTC 13174 / 8081).